The chain runs to 341 residues: S-adenosylmethionine:tRNA ribosyltransferase-isomerase (341 aa).

Belongs to the QueA family. As to quaternary structure, monomer.

The protein localises to the cytoplasm. It catalyses the reaction 7-aminomethyl-7-carbaguanosine(34) in tRNA + S-adenosyl-L-methionine = epoxyqueuosine(34) in tRNA + adenine + L-methionine + 2 H(+). The protein operates within tRNA modification; tRNA-queuosine biosynthesis. Its function is as follows. Transfers and isomerizes the ribose moiety from AdoMet to the 7-aminomethyl group of 7-deazaguanine (preQ1-tRNA) to give epoxyqueuosine (oQ-tRNA). This Chlorobium phaeovibrioides (strain DSM 265 / 1930) (Prosthecochloris vibrioformis (strain DSM 265)) protein is S-adenosylmethionine:tRNA ribosyltransferase-isomerase.